Reading from the N-terminus, the 106-residue chain is Putative membrane protein insertion efficiency factor (106 aa).

This sequence belongs to the UPF0161 family.

It is found in the cell inner membrane. Functionally, could be involved in insertion of integral membrane proteins into the membrane. This is Putative membrane protein insertion efficiency factor from Acinetobacter baumannii (strain AB307-0294).